Here is a 616-residue protein sequence, read N- to C-terminus: Proline--tRNA ligase (616 aa).

Belongs to the class-II aminoacyl-tRNA synthetase family. ProS type 1 subfamily. Homodimer.

The protein localises to the cytoplasm. It catalyses the reaction tRNA(Pro) + L-proline + ATP = L-prolyl-tRNA(Pro) + AMP + diphosphate. Its function is as follows. Catalyzes the attachment of proline to tRNA(Pro) in a two-step reaction: proline is first activated by ATP to form Pro-AMP and then transferred to the acceptor end of tRNA(Pro). As ProRS can inadvertently accommodate and process non-cognate amino acids such as alanine and cysteine, to avoid such errors it has two additional distinct editing activities against alanine. One activity is designated as 'pretransfer' editing and involves the tRNA(Pro)-independent hydrolysis of activated Ala-AMP. The other activity is designated 'posttransfer' editing and involves deacylation of mischarged Ala-tRNA(Pro). The misacylated Cys-tRNA(Pro) is not edited by ProRS. The sequence is that of Proline--tRNA ligase from Streptococcus mutans serotype c (strain ATCC 700610 / UA159).